The following is a 183-amino-acid chain: MRFSAVAGRYARALLNVAIEKEKEEEYLRFLDLVCQIYESSRELFDNPILKPEKKISLIKEIMKSFGQEMDEFQERFLTLVFERKRQKLLRNIRDLFEYEKILSEQKVPANLSIAHSPEDEELSLLRKFVRKYALKDPVFDISIDESLIAGALVEFEGFRLDTTVQGRLKRIAREALKRGEMS.

This sequence belongs to the ATPase delta chain family. As to quaternary structure, F-type ATPases have 2 components, F(1) - the catalytic core - and F(0) - the membrane proton channel. F(1) has five subunits: alpha(3), beta(3), gamma(1), delta(1), epsilon(1). F(0) has three main subunits: a(1), b(2) and c(10-14). The alpha and beta chains form an alternating ring which encloses part of the gamma chain. F(1) is attached to F(0) by a central stalk formed by the gamma and epsilon chains, while a peripheral stalk is formed by the delta and b chains.

Its subcellular location is the cell inner membrane. Its function is as follows. F(1)F(0) ATP synthase produces ATP from ADP in the presence of a proton or sodium gradient. F-type ATPases consist of two structural domains, F(1) containing the extramembraneous catalytic core and F(0) containing the membrane proton channel, linked together by a central stalk and a peripheral stalk. During catalysis, ATP synthesis in the catalytic domain of F(1) is coupled via a rotary mechanism of the central stalk subunits to proton translocation. This protein is part of the stalk that links CF(0) to CF(1). It either transmits conformational changes from CF(0) to CF(1) or is implicated in proton conduction. This Thermotoga maritima (strain ATCC 43589 / DSM 3109 / JCM 10099 / NBRC 100826 / MSB8) protein is ATP synthase subunit delta.